The following is a 109-amino-acid chain: uncharacterized protein (109 aa).

This is an uncharacterized protein from Mycobacterium tuberculosis (strain CDC 1551 / Oshkosh).